Consider the following 30-residue polypeptide: Trypsin inhibitor 4 (30 aa).

3 cysteine pairs are disulfide-bonded: Cys3/Cys20, Cys10/Cys22, and Cys16/Cys28.

The protein belongs to the protease inhibitor I7 (squash-type serine protease inhibitor) family.

It is found in the secreted. Functionally, inhibits trypsin; probably participates in a plant defense mechanism. The chain is Trypsin inhibitor 4 from Momordica charantia (Bitter gourd).